The primary structure comprises 378 residues: 1-acyl-sn-glycerol-3-phosphate acyltransferase delta (378 aa).

The chain crosses the membrane as a helical span at residues 11–31 (FLCHLVFCYVFIASGLIVNAI). Positions 96–101 (HKFEID) match the HXXXXD motif motif. 3 helical membrane-spanning segments follow: residues 125 to 145 (ELAYVPIIGWMWYFVEMIFCT), 311 to 331 (WLFWASLLLYPFFQFLVSMVS), and 338 to 358 (LASLVLIFCMASMGVRWMIGV).

The protein belongs to the 1-acyl-sn-glycerol-3-phosphate acyltransferase family. Expressed at a high levels in the brain, at intermediate or low levels in skeletal muscles, gut, kidney, spleen and lung. Barely detectable in heart and liver.

Its subcellular location is the endoplasmic reticulum membrane. It catalyses the reaction a 1-acyl-sn-glycero-3-phosphate + an acyl-CoA = a 1,2-diacyl-sn-glycero-3-phosphate + CoA. The enzyme catalyses (4Z,7Z,10Z,13Z,16Z,19Z)-docosahexaenoyl-CoA + 1-hexadecanoyl-sn-glycero-3-phosphate = 1-hexadecanoyl-2-(4Z,7Z,10Z,13Z,16Z,19Z-docosahexaenoyl)-sn-glycero-3-phosphate + CoA. It carries out the reaction 1-octadecanoyl-sn-glycero-3-phosphate + (9Z,12Z)-octadecadienoyl-CoA = 1-octadecanoyl-2-(9Z,12Z-octadecadienoyl)-sn-glycero-3-phosphate + CoA. The catalysed reaction is 1-octadecanoyl-sn-glycero-3-phosphate + (4Z,7Z,10Z,13Z,16Z,19Z)-docosahexaenoyl-CoA = 1-octadecanoyl-2-(4Z,7Z,10Z,13Z,16Z,19Z-docosahexaenoyl)-sn-glycero-3-phosphate + CoA. It catalyses the reaction (4Z,7Z,10Z,13Z,16Z,19Z)-docosahexaenoyl-CoA + 1-(9Z-octadecenoyl)-sn-glycero-3-phosphate = 1-(9Z-octadecenoyl)-2-(4Z,7Z,10Z,13Z,16Z,19Z-docosahexaenoyl)-sn-glycero-3-phosphate + CoA. It participates in phospholipid metabolism; CDP-diacylglycerol biosynthesis; CDP-diacylglycerol from sn-glycerol 3-phosphate: step 2/3. Functionally, converts 1-acyl-sn-glycerol-3-phosphate (lysophosphatidic acid or LPA) into 1,2-diacyl-sn-glycerol-3-phosphate (phosphatidic acid or PA) by incorporating an acyl moiety at the sn-2 position of the glycerol backbone. Exhibits high acyl-CoA specificity for polyunsaturated fatty acyl-CoA, especially docosahexaenoyl-CoA (22:6-CoA, DHA-CoA). The polypeptide is 1-acyl-sn-glycerol-3-phosphate acyltransferase delta (Agpat4) (Mus musculus (Mouse)).